The primary structure comprises 152 residues: Neuromedin-S (152 aa).

The signal sequence occupies residues 1–26; it reads MKHPFPQFPPILVIYCFCMLQIPSSG. Propeptides lie at residues 27–69, 70–105, and 106–108; these read ASPP…VYKR, FLFH…PSRR, and MKR. Position 144 is an asparagine amide (asparagine 144). The propeptide occupies 147–152; sequence YTDKVQ.

The protein belongs to the NmU family. As to expression, expressed in the CNS, spleen and testis. Specifically expressed in the suprachiasmatic nuclei (SCN) of the hypothalamus.

It is found in the secreted. In terms of biological role, implicated in the regulation of circadian rhythms through autocrine and/or paracrine actions. Stimulates the contraction of rectum and elevation of blood pressure. This chain is Neuromedin-S (Nms), found in Rattus norvegicus (Rat).